The sequence spans 246 residues: Flagellar brake protein YcgR (246 aa).

The region spanning 122-234 (QRREFFRIQT…PMETIIQRYV (113 aa)) is the PilZ domain.

This sequence belongs to the YcgR family. Monomer. Interacts with the flagellar basal bodies.

The protein resides in the bacterial flagellum basal body. In terms of biological role, acts as a flagellar brake, regulating swimming and swarming in a bis-(3'-5') cyclic diguanylic acid (c-di-GMP)-dependent manner. Binds 1 c-di-GMP dimer per subunit. Increasing levels of c-di-GMP lead to decreased motility. The sequence is that of Flagellar brake protein YcgR from Chromobacterium violaceum (strain ATCC 12472 / DSM 30191 / JCM 1249 / CCUG 213 / NBRC 12614 / NCIMB 9131 / NCTC 9757 / MK).